A 707-amino-acid polypeptide reads, in one-letter code: Glucose starvation modulator protein 1 (707 aa).

A DNA-binding region (zn(2)-C6 fungal-type) is located at residues 20–48; sequence CTFCHQKHLQCSNERPCKNCVKRNIADQC. Disordered regions lie at residues 63–122, 154–188, 260–283, and 385–404; these read NSKA…PNDL, QPTH…PPES, DQQQ…GPSH, and NVSS…SAIA. 2 stretches are compositionally biased toward low complexity: residues 66-79 and 91-104; these read AVAA…TTTT and SPSI…ISPI. Composition is skewed to polar residues over residues 105–114 and 154–172; these read NTSTFDTNGH and QPTH…QVQP. A compositionally biased stretch (low complexity) spans 178–188; the sequence is SSVPPSAPPES. The span at 260 to 274 shows a compositional bias: polar residues; that stretch reads DQQQSSSEATGTSAS. The PAS domain occupies 522-591; it reads DYEKLSQLNS…FQLFKSVAVG (70 aa). Residues 621 to 652 are compositionally biased toward low complexity; the sequence is NYNNNYNHNYSHNNNNNNNSNNSNNNGMSTGA. The disordered stretch occupies residues 621–659; that stretch reads NYNNNYNHNYSHNNNNNNNSNNSNNNGMSTGAGNSGDGD.

Belongs to the ERT1/acuK family.

Its subcellular location is the nucleus. Transcription factor which regulates nonfermentable carbon utilization. This chain is Glucose starvation modulator protein 1 (GSM1), found in Lodderomyces elongisporus (strain ATCC 11503 / CBS 2605 / JCM 1781 / NBRC 1676 / NRRL YB-4239) (Yeast).